Consider the following 181-residue polypeptide: UPF0397 protein SUB0313 (181 aa).

The next 5 membrane-spanning stretches (helical) occupy residues 11-31 (AIGI…ITIF), 45-65 (LFSV…GHML), 69-89 (FAGY…GLGI), 114-134 (VQAL…DILI), and 147-167 (LFAA…LLIA).

The protein belongs to the UPF0397 family.

The protein localises to the cell membrane. This Streptococcus uberis (strain ATCC BAA-854 / 0140J) protein is UPF0397 protein SUB0313.